Here is a 147-residue protein sequence, read N- to C-terminus: Phospholipase A2-beta (147 aa).

Residues 1-28 (MMFRTSLMRFAAAFFAIVFVVLVGVARS) form the signal peptide. 6 cysteine pairs are disulfide-bonded: Cys-31–Cys-58, Cys-35–Cys-64, Cys-40–Cys-117, Cys-51–Cys-71, Cys-70–Cys-95, and Cys-77–Cys-88. Residues Tyr-50, Gly-52, and His-55 each contribute to the Ca(2+) site. The active site involves His-74. Asp-75 serves as a coordination point for Ca(2+). Positions 144-147 (KTEL) match the Prevents secretion from ER motif.

Belongs to the phospholipase A2 family. It depends on Ca(2+) as a cofactor. As to expression, ubiquitous but expressed at a low level. Detected in vascular tissues and in the guard cells. Predominantly detected in pollen.

The protein resides in the secreted. Its subcellular location is the endoplasmic reticulum. It catalyses the reaction a 1,2-diacyl-sn-glycero-3-phosphocholine + H2O = a 1-acyl-sn-glycero-3-phosphocholine + a fatty acid + H(+). Inhibited by aristolochic acid. PA2 catalyzes the calcium-dependent hydrolysis of the 2-acyl groups in 3-sn-phosphoglycerides. Releases lysophospholipids (LPLs) and free fatty acids (FFAs) from membrane phospholipids in response to hormones and other external stimuli. Regulates the process of cell elongation and plays important roles in shoot gravitropism by mediating auxin-induced cell elongation. Involved in stomatal opening in response to light. Plays a role in pollen development and germination and tube growth. The polypeptide is Phospholipase A2-beta (PLA2-BETA) (Arabidopsis thaliana (Mouse-ear cress)).